Reading from the N-terminus, the 532-residue chain is Metal-staphylopine-binding protein CntA (532 aa).

Residues 1-20 (MRKLTKMSAMLLASGLILTG) form the signal peptide. Cysteine 21 carries the N-palmitoyl cysteine lipid modification. A lipid anchor (S-diacylglycerol cysteine) is attached at cysteine 21. Staphylopine-binding residues include arginine 165, arginine 418, and asparagine 448.

Belongs to the bacterial solute-binding protein 5 family. As to quaternary structure, the complex is composed of two ATP-binding proteins (CntD and CntF), two transmembrane proteins (CntB and CntC) and a solute-binding protein (CntA).

It localises to the cell membrane. In terms of biological role, part of the ABC transporter complex CntABCDF (Opp1) involved in the uptake of metal in complex with the metallophore staphylopine (StP). May be involved in the import of a large array of divalent metals ions such as nickel, cobalt, zinc, copper and iron. Binds the metal via the metallophore StP, and transfers the StP-metal complex to the membrane-bound permease. The sequence is that of Metal-staphylopine-binding protein CntA from Staphylococcus aureus (strain Mu50 / ATCC 700699).